Consider the following 380-residue polypeptide: Tryptophan--tRNA ligase 2 (380 aa).

Residues 74-82 carry the 'HIGH' region motif; that stretch reads PSGPMHLGH. Positions 249-253 match the 'KMSKS' region motif; that stretch reads KMSSS.

This sequence belongs to the class-I aminoacyl-tRNA synthetase family.

The protein resides in the cytoplasm. It carries out the reaction tRNA(Trp) + L-tryptophan + ATP = L-tryptophyl-tRNA(Trp) + AMP + diphosphate + H(+). This is Tryptophan--tRNA ligase 2 from Halobacterium salinarum (strain ATCC 700922 / JCM 11081 / NRC-1) (Halobacterium halobium).